A 137-amino-acid polypeptide reads, in one-letter code: Putative pre-16S rRNA nuclease (137 aa).

The protein belongs to the YqgF nuclease family.

The protein resides in the cytoplasm. Its function is as follows. Could be a nuclease involved in processing of the 5'-end of pre-16S rRNA. This chain is Putative pre-16S rRNA nuclease, found in Bacillus cytotoxicus (strain DSM 22905 / CIP 110041 / 391-98 / NVH 391-98).